Reading from the N-terminus, the 312-residue chain is Aspartate carbamoyltransferase catalytic subunit (312 aa).

The carbamoyl phosphate site is built by arginine 54 and threonine 55. An L-aspartate-binding site is contributed by lysine 83. Carbamoyl phosphate contacts are provided by arginine 104, histidine 132, and glutamine 135. L-aspartate contacts are provided by arginine 165 and arginine 226. Positions 263 and 264 each coordinate carbamoyl phosphate.

The protein belongs to the aspartate/ornithine carbamoyltransferase superfamily. ATCase family. As to quaternary structure, heterooligomer of catalytic and regulatory chains.

The enzyme catalyses carbamoyl phosphate + L-aspartate = N-carbamoyl-L-aspartate + phosphate + H(+). It functions in the pathway pyrimidine metabolism; UMP biosynthesis via de novo pathway; (S)-dihydroorotate from bicarbonate: step 2/3. In terms of biological role, catalyzes the condensation of carbamoyl phosphate and aspartate to form carbamoyl aspartate and inorganic phosphate, the committed step in the de novo pyrimidine nucleotide biosynthesis pathway. In Methanothermobacter thermautotrophicus (strain ATCC 29096 / DSM 1053 / JCM 10044 / NBRC 100330 / Delta H) (Methanobacterium thermoautotrophicum), this protein is Aspartate carbamoyltransferase catalytic subunit.